A 347-amino-acid polypeptide reads, in one-letter code: NADH-ubiquinone oxidoreductase chain 2 (347 aa).

Transmembrane regions (helical) follow at residues 3-23 (PLIF…VMTT), 25-45 (HWVM…PILM), 59-79 (YFLT…INLT), 96-116 (IIMT…FWVP), 122-142 (VQLS…MSIL), 149-169 (INLD…GWGG), 178-198 (ILAY…VYNP), 201-221 (ALLN…MLMV), 237-257 (MPLL…LPPL), 274-294 (DSMI…YFYM), and 326-346 (LSPL…LALL).

It belongs to the complex I subunit 2 family. In terms of assembly, core subunit of respiratory chain NADH dehydrogenase (Complex I) which is composed of 45 different subunits. Interacts with TMEM242.

It localises to the mitochondrion inner membrane. It catalyses the reaction a ubiquinone + NADH + 5 H(+)(in) = a ubiquinol + NAD(+) + 4 H(+)(out). Functionally, core subunit of the mitochondrial membrane respiratory chain NADH dehydrogenase (Complex I) which catalyzes electron transfer from NADH through the respiratory chain, using ubiquinone as an electron acceptor. Essential for the catalytic activity and assembly of complex I. The chain is NADH-ubiquinone oxidoreductase chain 2 from Nyctimene aello (Broad-striped tube-nosed fruit bat).